The primary structure comprises 497 residues: TBC1 domain family member 22A (497 aa).

The disordered stretch occupies residues 83-147 (RNHSQRQGRP…DAAPLQRSQS (65 aa)). Residues Ser-112, Ser-125, and Ser-147 each carry the phosphoserine modification. Residues 202–426 (GIPKPVRPMT…RLWDTYQSEP (225 aa)) enclose the Rab-GAP TBC domain.

As to quaternary structure, homodimer. Interacts with ACBD3 and ARFGEF1. Interacts with YWHAB, YWHAE, YWHAG, YWHAH, YWHAQ and YWHAZ.

Its function is as follows. May act as a GTPase-activating protein for Rab family protein(s). The protein is TBC1 domain family member 22A (TBC1D22A) of Macaca fascicularis (Crab-eating macaque).